We begin with the raw amino-acid sequence, 327 residues long: Chromatin modification-related protein eaf3 (327 aa).

One can recognise a Tudor-knot domain in the interval 13-66 (ERVLCFHHEILYEAKILDLRHTDPDDRKSPYEYLVHYKGWKNTWDDWVPQDRLR). Residues 85–132 (AALRQKSTKTSLKKKGGSDHSSARGSEERQTSVPGRGTKRARDNDIEK) are disordered. Residues 100–114 (GGSDHSSARGSEERQ) are compositionally biased toward basic and acidic residues. An MRG domain is found at 138 to 312 (TRPSVRIVMP…ASNEYIEKSR (175 aa)).

This sequence belongs to the MRG family. In terms of assembly, component of the NuA4 histone acetyltransferase complex.

Its subcellular location is the nucleus. In terms of biological role, involved in deacetylation of histones, chromatin assembly and chromosome segregation. May act as a transcriptional oscillator, directing histone deacetylases to specific chromosomal domains. Component of the NuA4 histone acetyltransferase complex which is involved in transcriptional activation of selected genes principally by acetylation of nucleosomal histone H4 and H2A. The NuA4 complex is also involved in DNA repair. This chain is Chromatin modification-related protein eaf3 (eaf3), found in Emericella nidulans (strain FGSC A4 / ATCC 38163 / CBS 112.46 / NRRL 194 / M139) (Aspergillus nidulans).